Here is a 229-residue protein sequence, read N- to C-terminus: uncharacterized protein (229 aa).

An S4 RNA-binding domain is found at 2 to 69 (QRLAKIISNA…KPRLWIYYKP (68 aa)). Aspartate 102 serves as the catalytic Nucleophile.

This sequence belongs to the pseudouridine synthase RsuA family.

It carries out the reaction a uridine in RNA = a pseudouridine in RNA. This is an uncharacterized protein from Rickettsia felis (strain ATCC VR-1525 / URRWXCal2) (Rickettsia azadi).